The primary structure comprises 295 residues: Biliverdin reductase A (295 aa).

A propeptide spanning residues 1–2 is cleaved from the precursor; it reads MS. NAD(+)-binding positions include 18–19, 76–79, and Y97; these read RA and SSSH. S154 carries the post-translational modification Phosphoserine. An NAD(+)-binding site is contributed by S167. T173 is modified (phosphothreonine). Residues S177 and S229 each carry the phosphoserine modification. K247 and K252 each carry N6-acetyllysine. Residues H279, C280, C291, and H292 each contribute to the Zn(2+) site.

Belongs to the Gfo/Idh/MocA family. Biliverdin reductase subfamily. In terms of assembly, monomer. It depends on Zn(2+) as a cofactor.

The protein localises to the cytoplasm. The protein resides in the cytosol. It catalyses the reaction (4Z,15Z)-bilirubin IXalpha + NAD(+) = biliverdin IXalpha + NADH + H(+). The enzyme catalyses (4Z,15Z)-bilirubin IXalpha + NADP(+) = biliverdin IXalpha + NADPH + H(+). The protein operates within porphyrin-containing compound metabolism; protoheme degradation. Functionally, reduces the gamma-methene bridge of the open tetrapyrrole, biliverdin IXalpha, to bilirubin with the concomitant oxidation of a NADH or NADPH cofactor. Does not reduce bilirubin IXbeta. Uses the reactants NADH or NADPH depending on the pH; NADH is used at the acidic pH range (6-6.9) and NADPH at the alkaline range (8.5-8.7). NADPH, however, is the probable reactant in biological systems. This chain is Biliverdin reductase A, found in Mus musculus (Mouse).